Here is a 299-residue protein sequence, read N- to C-terminus: HTH-type transcriptional regulator PgrR (299 aa).

Residues Glu-4 to Thr-61 form the HTH lysR-type domain. A DNA-binding region (H-T-H motif) is located at residues Phe-21 to Arg-40.

The protein belongs to the LysR transcriptional regulatory family.

Regulates the expression of genes involved in peptidoglycan (PG) degradation. Could play a role in switch control between recycling and degradation of PG peptides. Negatively regulates the expression of the ycjY-ymjD-ymjC-mpaA operon by binding to the PgrR-box. In addition, other genes are predicted to be under the control of PgrR, including genes related to membrane formation and function. The polypeptide is HTH-type transcriptional regulator PgrR (pgrR) (Escherichia coli (strain K12)).